The chain runs to 426 residues: Histidine--tRNA ligase (426 aa).

It belongs to the class-II aminoacyl-tRNA synthetase family. Homodimer.

Its subcellular location is the cytoplasm. It catalyses the reaction tRNA(His) + L-histidine + ATP = L-histidyl-tRNA(His) + AMP + diphosphate + H(+). The polypeptide is Histidine--tRNA ligase (Streptococcus agalactiae serotype III (strain NEM316)).